The primary structure comprises 312 residues: tRNA dimethylallyltransferase (312 aa).

19-26 (GPSGSGKS) lines the ATP pocket. Substrate is bound at residue 21–26 (SGSGKS). The interval 44 to 47 (DSLS) is interaction with substrate tRNA.

The protein belongs to the IPP transferase family. As to quaternary structure, monomer. The cofactor is Mg(2+).

It catalyses the reaction adenosine(37) in tRNA + dimethylallyl diphosphate = N(6)-dimethylallyladenosine(37) in tRNA + diphosphate. Catalyzes the transfer of a dimethylallyl group onto the adenine at position 37 in tRNAs that read codons beginning with uridine, leading to the formation of N6-(dimethylallyl)adenosine (i(6)A). In Helicobacter pylori (strain J99 / ATCC 700824) (Campylobacter pylori J99), this protein is tRNA dimethylallyltransferase.